Consider the following 263-residue polypeptide: MSSYHLSTRERLLAIINDIEIVAKELIENTIAPKAQKMSSTDHAQLVELLVLKDKELKATLQLAAEQAGIEKNMDALREQVRKQDEEINQLQRQLKEAEQILATSIFQARQKLASIAKANKRPVSSEELIKFAHRISASHAICAPLTWQQGDLRRPYPTDIEMRLGFLGKSDLNINGHNLQHPNSLNEMHRNASTVGAGGAGGDIPASAPNQFAWHPSGELHMSMGAGAGSVSLDTRAHKDASQDDVEVMSTESSSSSSSDSQ.

Residues 61-111 are a coiled coil; sequence LQLAAEQAGIEKNMDALREQVRKQDEEINQLQRQLKEAEQILATSIFQARQ. 2 disordered regions span residues 209-228 and 235-263; these read APNQFAWHPSGELHMSMGAG and DTRAHKDASQDDVEVMSTESSSSSSSDSQ. A compositionally biased stretch (low complexity) spans 251–263; the sequence is STESSSSSSSDSQ.

The protein belongs to the Mediator complex subunit 4 family. In terms of assembly, component of the Mediator complex.

The protein localises to the nucleus. Its function is as follows. Component of the Mediator complex, a coactivator involved in the regulated transcription of nearly all RNA polymerase II-dependent genes. Mediator functions as a bridge to convey information from gene-specific regulatory proteins to the basal RNA polymerase II transcription machinery. Mediator is recruited to promoters by direct interactions with regulatory proteins and serves as a scaffold for the assembly of a functional preinitiation complex with RNA polymerase II and the general transcription factors. This chain is Mediator of RNA polymerase II transcription subunit 4 (MED4), found in Anopheles gambiae (African malaria mosquito).